Consider the following 51-residue polypeptide: Defensin-like protein 1 (51 aa).

Pyrrolidone carboxylic acid is present on Gln-1. Cystine bridges form between Cys-4–Cys-51, Cys-15–Cys-36, Cys-21–Cys-45, and Cys-25–Cys-47.

Forms oligomers in its native state.

In terms of biological role, possesses antifungal activity sensitive to inorganic cations. The sequence is that of Defensin-like protein 1 from Sinapis alba (White mustard).